The chain runs to 434 residues: Glycylpeptide N-tetradecanoyltransferase 1 (434 aa).

A disordered region spans residues 1–24 (MADNNSPPGSVEQKADQIVEANPL). An N-acetylalanine modification is found at alanine 2. Residues 48 to 51 (HKFW), 184 to 186 (LCV), and 192 to 196 (SKRLA) each bind tetradecanoyl-CoA. The active-site Proton acceptor; via carboxylate is the leucine 434.

It belongs to the NMT family. As to expression, expressed ubiquitously, with higher levels in young tissues (at protein level).

It localises to the cytoplasm. The catalysed reaction is N-terminal glycyl-[protein] + tetradecanoyl-CoA = N-tetradecanoylglycyl-[protein] + CoA + H(+). Functionally, adds a myristoyl group to the N-terminal glycine residue of certain cellular proteins. Can also use decanoyl-CoA and lauroyl-CoA as substrates. This is Glycylpeptide N-tetradecanoyltransferase 1 (NMT1) from Arabidopsis thaliana (Mouse-ear cress).